Consider the following 89-residue polypeptide: Acylphosphatase (89 aa).

One can recognise an Acylphosphatase-like domain in the interval 3-89 (ALEIYVSGNV…ENYESFEVAY (87 aa)). Catalysis depends on residues arginine 18 and asparagine 36.

This sequence belongs to the acylphosphatase family.

The enzyme catalyses an acyl phosphate + H2O = a carboxylate + phosphate + H(+). This chain is Acylphosphatase (acyP), found in Archaeoglobus fulgidus (strain ATCC 49558 / DSM 4304 / JCM 9628 / NBRC 100126 / VC-16).